A 1136-amino-acid chain; its full sequence is Rho GTPase-activating protein 45 (1136 aa).

Disordered stretches follow at residues 1–73 and 91–110; these read MFSR…RHAS and HRSPLTAASPGELPTEGAGP. 5 positions are modified to phosphoserine: Ser23, Ser25, Ser73, Ser93, and Ser99. Residues 269–539 form the F-BAR domain; that stretch reads EEVDVLLQRC…SSKLYDPGQQ (271 aa). Coiled-coil stretches lie at residues 376–412 and 440–499; these read EHEKRRKEIKEAWHRAQRKLQEAESNLRKAKQGYVQR and TATK…RQSD. Ser569, Ser578, Ser592, and Ser619 each carry phosphoserine. Positions 583 to 662 are disordered; it reads DVARPEAAGS…SSTEELVDPD (80 aa). Over residues 646–655 the composition is skewed to low complexity; it reads TSSSGTMSST. The segment at 702–747 adopts a Phorbol-ester/DAG-type zinc-finger fold; that stretch reads THRLRKLRTPAKCRECNSYVYFQGAECEECCLACHKKCLETLAIQC. Residues 761 to 974 enclose the Rho-GAP domain; that stretch reads QDFSHAARSA…TLIVHYGLVF (214 aa). Residues Ser949, Ser1027, Ser1030, and Ser1032 each carry the phosphoserine modification. The tract at residues 1061–1136 is disordered; sequence EASLEVASGS…SCRERQPEFV (76 aa). Positions 1095 to 1109 are enriched in polar residues; the sequence is QQLSGFNTNQSNNVL.

HA-1 forms a complex with MHC class I HLA-A*0201. Expressed on cells of the hematopoietic lineage. Detected in dendritic cells and epidermal Langerhans cells. Expressed in peripheral blood mononuclear cells, in all leukemia/lymphoma cell lines. Detected also in some solid tumors and tissues such as cancerous and non-cancerous tissue.

Its subcellular location is the cytoplasm. It is found in the cell projection. The protein resides in the ruffle membrane. Contains a GTPase activator for the Rho-type GTPases (RhoGAP) domain that would be able to negatively regulate the actin cytoskeleton as well as cell spreading. However, also contains N-terminally a BAR-domin which is able to play an autoinhibitory effect on this RhoGAP activity. Its function is as follows. Precursor of the histocompatibility antigen HA-1. More generally, minor histocompatibility antigens (mHags) refer to immunogenic peptide which, when complexed with MHC, can generate an immune response after recognition by specific T-cells. The peptides are derived from polymorphic intracellular proteins, which are cleaved by normal pathways of antigen processing. The binding of these peptides to MHC class I or class II molecules and its expression on the cell surface can stimulate T-cell responses and thereby trigger graft rejection or graft-versus-host disease (GVHD) after hematopoietic stem cell transplantation from HLA-identical sibling donor. GVHD is a frequent complication after bone marrow transplantation (BMT), due to mismatch of minor histocompatibility antigen in HLA-matched sibling marrow transplants. Specifically, mismatching for mHag HA-1 which is recognized as immunodominant, is shown to be associated with the development of severe GVHD after HLA-identical BMT. HA-1 is presented to the cell surface by MHC class I HLA-A*0201, but also by other HLA-A alleles. This complex specifically elicits donor-cytotoxic T-lymphocyte (CTL) reactivity against hematologic malignancies after treatment by HLA-identical allogenic BMT. It induces cell recognition and lysis by CTL. The protein is Rho GTPase-activating protein 45 of Homo sapiens (Human).